The sequence spans 307 residues: Transmembrane and coiled-coil domain-containing protein 5B (307 aa).

Residues 17–207 (FASSLEAVKQ…LEKQISKAQD (191 aa)) adopt a coiled-coil conformation. Residues 243–265 (YFQYLTFMVLVFIRLLAYVIFHL) form a helical membrane-spanning segment.

Belongs to the TMCO5 family.

It is found in the membrane. This Homo sapiens (Human) protein is Transmembrane and coiled-coil domain-containing protein 5B (TMCO5B).